Consider the following 206-residue polypeptide: Ribosomal RNA large subunit methyltransferase E (206 aa).

S-adenosyl-L-methionine-binding residues include glycine 60, tryptophan 62, aspartate 80, aspartate 96, and aspartate 121. Catalysis depends on lysine 161, which acts as the Proton acceptor.

Belongs to the class I-like SAM-binding methyltransferase superfamily. RNA methyltransferase RlmE family.

It is found in the cytoplasm. The catalysed reaction is uridine(2552) in 23S rRNA + S-adenosyl-L-methionine = 2'-O-methyluridine(2552) in 23S rRNA + S-adenosyl-L-homocysteine + H(+). Its function is as follows. Specifically methylates the uridine in position 2552 of 23S rRNA at the 2'-O position of the ribose in the fully assembled 50S ribosomal subunit. The protein is Ribosomal RNA large subunit methyltransferase E of Hahella chejuensis (strain KCTC 2396).